A 340-amino-acid chain; its full sequence is Probable tRNA pseudouridine synthase B (340 aa).

The Nucleophile role is filled by Asp-82. In terms of domain architecture, PUA spans 250–325; sequence LPKVWIKDSA…IAVDVEKVFM (76 aa).

This sequence belongs to the pseudouridine synthase TruB family. Type 2 subfamily.

The enzyme catalyses uridine(55) in tRNA = pseudouridine(55) in tRNA. Functionally, could be responsible for synthesis of pseudouridine from uracil-55 in the psi GC loop of transfer RNAs. The protein is Probable tRNA pseudouridine synthase B of Pyrococcus furiosus (strain ATCC 43587 / DSM 3638 / JCM 8422 / Vc1).